Consider the following 262-residue polypeptide: Versicolorin reductase 1 (262 aa).

I21, D67, N94, and R127 together coordinate NADP(+). Catalysis depends on proton donor residues S143 and S144. NADP(+) is bound by residues Y158, K162, I191, and T193. The active-site Proton acceptor is Y158. The Lowers pKa of active site Tyr role is filled by K162.

The protein belongs to the short-chain dehydrogenases/reductases (SDR) family.

The protein localises to the cytoplasm. Its subcellular location is the cytosol. It catalyses the reaction (4S,8R)-2,13,16,20-tetrahydroxy-7,9-dioxapentacyclo[10.8.0.0(3,10).0(4,8).0(14,19)]icosa-1(12),2,5,10,13,16,19-heptaen-18-one + NADPH + H(+) = (4S,8R,16R)-2,13,16,20-tetrahydroxy-7,9-dioxapentacyclo[10.8.0.0(3,10).0(4,8).0(14,19)]icosa-1(12),2,5,10,13,19-hexaen-18-one + NADP(+). It participates in mycotoxin biosynthesis; aflatoxin biosynthesis. Functionally, cytochrome P450 monooxygenase; part of the gene cluster that mediates the biosynthesis of aflatoxins, a group of polyketide-derived furanocoumarins, and part of the most toxic and carcinogenic compounds among the known mycotoxins. The four major aflatoxins produced by A.parasiticus are aflatoxin B1 (AFB1), aflatoxin B2 (AFB2), aflatoxin G1 (AFG1) and aflatoxin G2 (AFG2). Within the aflatoxin pathway, with the cytochrome P450 monooxygenase aflN, the versicolorin reductase aflM, is involved in conversion of VERA to demethylsterigmatocystin (DMST). The biosynthesis of aflatoxins begins with the norsolorinic acid synthase aflC that combines a hexanoyl starter unit produced by the fatty acid synthase aflA/aflB and 7 malonyl-CoA extender units to synthesize the precursor NOR. The second step is the conversion of NOR to averantin and requires the norsolorinic acid ketoreductase aflD, which catalyzes the dehydration of norsolorinic acid to form (1'S)-averantin. The norsolorinic acid reductases aflE and aflF may also play a role in the conversion of NOR to AVN. The cytochrome P450 monooxygenase aflG then catalyzes the hydroxylation of AVN to 5'hydroxyaverantin (HAVN). The next step is performed by the 5'-hydroxyaverantin dehydrogenase aflH that transforms HAVN to 5'-oxoaverantin (OAVN) which is further converted to averufin (AVF) by aflK that plays a dual role in the pathway, as a 5'-oxoaverantin cyclase that mediates conversion of 5'-oxoaverantin, as well as a versicolorin B synthase in a later step in the pathway. The averufin oxidase aflI catalyzes the conversion of AVF to versiconal hemiacetal acetate (VHA). VHA is then the substrate for the versiconal hemiacetal acetate esterase aflJ to yield versiconal (VAL). Versicolorin B synthase aflK then converts VAL to versicolorin B (VERB) by closing the bisfuran ring of aflatoxin which is required for DNA-binding, thus giving to aflatoxin its activity as a mutagen. Then, the activity of the versicolorin B desaturase aflL leads to versicolorin A (VERA). A branch point starts from VERB since it can also be converted to dihydrodemethylsterigmatocystin (DMDHST), probably also by aflL, VERA being a precursor for aflatoxins B1 and G1, and DMDHST for aflatoxins B2 and G2. Next, the versicolorin reductase aflM and the cytochrome P450 monooxygenase aflN are involved in conversion of VERA to demethylsterigmatocystin (DMST). AflX and aflY seem also involved in this step, through probable aflX-mediated epoxide ring-opening step following versicolorin A oxidation and aflY-mediated Baeyer-Villiger oxidation required for the formation of the xanthone ring. The methyltransferase aflO then leads to the modification of DMST to sterigmatocystin (ST), and of DMDHST to dihydrosterigmatocystin (DHST). Both ST and DHST are then substrates of the O-methyltransferase aflP to yield O-methylsterigmatocystin (OMST) and dihydro-O-methylsterigmatocystin (DHOMST), respectively. Finally OMST is converted to aflatoxins B1 and G1, and DHOMST to aflatoxins B2 and G2, via the action of several enzymes including O-methylsterigmatocystin oxidoreductase aflQ, the cytochrome P450 monooxygenase aflU, but also the NADH-dependent flavin oxidoreductase nadA which is specifically required for the synthesis of AFG1. This is Versicolorin reductase 1 from Aspergillus parasiticus (strain ATCC 56775 / NRRL 5862 / SRRC 143 / SU-1).